Here is a 219-residue protein sequence, read N- to C-terminus: Transmembrane protein 179B (219 aa).

Transmembrane regions (helical) follow at residues 9–29 (VELL…ATLT), 65–85 (FVAG…FFWV), 98–118 (IGLR…LVSA), and 162–182 (LHTA…ALLL). Position 206 is a phosphoserine (serine 206).

It belongs to the TMEM179 family.

Its subcellular location is the membrane. In Mus musculus (Mouse), this protein is Transmembrane protein 179B (Tmem179b).